The sequence spans 90 residues: Probable Fe(2+)-trafficking protein (90 aa).

The protein belongs to the Fe(2+)-trafficking protein family.

Its function is as follows. Could be a mediator in iron transactions between iron acquisition and iron-requiring processes, such as synthesis and/or repair of Fe-S clusters in biosynthetic enzymes. The protein is Probable Fe(2+)-trafficking protein of Aliivibrio fischeri (strain ATCC 700601 / ES114) (Vibrio fischeri).